The primary structure comprises 107 residues: Theromyzin (107 aa).

The N-terminal stretch at Met1–Ala21 is a signal peptide.

In terms of tissue distribution, coelomic liquid (at protein level). Expressed in large fat cells in contact with coelomic cavities, in intestinal epithelia and at the epidermis level.

The protein localises to the secreted. In terms of biological role, has bacteriostatic activity against M.luteus. No activity toward E.coli and F.oxysporum. This is Theromyzin from Theromyzon tessulatum (Duck leech).